We begin with the raw amino-acid sequence, 312 residues long: MILNCNPFSGLFLSMYLVTVLGNLLIILAVSSNSHLHNLMYFFLSNLSFVDICFISTTIPKMLVNIHSQTKDISYIECLSQVYFLTTFGGMDNFLLTLMACDRYVAICHPLNYTVIMNLQLCALLILMFWLIMFCVSLIHVLLMNELNFSRGTEIPHFFCELAQVLKVANSDTHINNVFMYVVTSLLGLIPMTGILMSYSQIASSLLKMSSSVSKYKAFSTCGSHLCVVSLFYGSATIVYFCSSVLHSTHKKMIASLMYTVISPMLNPFIYSLRNKDVKGALGKLFIRVASCPLWSKDFRPKFILKPERQSL.

Topologically, residues 1–6 are extracellular; sequence MILNCN. Residues 7 to 30 traverse the membrane as a helical segment; that stretch reads PFSGLFLSMYLVTVLGNLLIILAV. Residues 31-38 lie on the Cytoplasmic side of the membrane; the sequence is SSNSHLHN. The helical transmembrane segment at 39–60 threads the bilayer; that stretch reads LMYFFLSNLSFVDICFISTTIP. Over 61-81 the chain is Extracellular; the sequence is KMLVNIHSQTKDISYIECLSQ. The cysteines at positions 78 and 160 are disulfide-linked. A helical membrane pass occupies residues 82 to 101; sequence VYFLTTFGGMDNFLLTLMAC. The Cytoplasmic segment spans residues 102–120; sequence DRYVAICHPLNYTVIMNLQ. The chain crosses the membrane as a helical span at residues 121–139; that stretch reads LCALLILMFWLIMFCVSLI. At 140 to 177 the chain is on the extracellular side; the sequence is HVLLMNELNFSRGTEIPHFFCELAQVLKVANSDTHINN. Asn-148 carries N-linked (GlcNAc...) asparagine glycosylation. The helical transmembrane segment at 178–200 threads the bilayer; sequence VFMYVVTSLLGLIPMTGILMSYS. The Cytoplasmic segment spans residues 201–217; that stretch reads QIASSLLKMSSSVSKYK. Residues 218–241 traverse the membrane as a helical segment; the sequence is AFSTCGSHLCVVSLFYGSATIVYF. Topologically, residues 242–253 are extracellular; it reads CSSVLHSTHKKM. Residues 254-273 form a helical membrane-spanning segment; that stretch reads IASLMYTVISPMLNPFIYSL. The Cytoplasmic segment spans residues 274 to 312; it reads RNKDVKGALGKLFIRVASCPLWSKDFRPKFILKPERQSL.

Belongs to the G-protein coupled receptor 1 family. In terms of tissue distribution, epithelium of the tongue; including the taste buds.

Its subcellular location is the cell membrane. Its function is as follows. Possible olfactory or taste receptor. The sequence is that of Olfactory receptor 867 (Olr867) from Rattus norvegicus (Rat).